A 310-amino-acid chain; its full sequence is Serine protease 30 (310 aa).

The N-terminal stretch at 1–21 is a signal peptide; it reads MESRARCIFLLLLQILTRARG. Residues 22-36 constitute a propeptide, activation peptide; the sequence is DILPSVCGHSRDAGK. The Peptidase S1 domain maps to 37 to 277; sequence IVGGQDALEG…YVDWIQRILA (241 aa). A disulfide bond links Cys-63 and Cys-79. Catalysis depends on charge relay system residues His-78 and Asp-128. 3 disulfide bridges follow: Cys-161–Cys-235, Cys-191–Cys-214, and Cys-225–Cys-253. Residue Ser-229 is the Charge relay system of the active site. N-linked (GlcNAc...) asparagine glycans are attached at residues Asn-238 and Asn-279. A lipid anchor (GPI-anchor amidated serine) is attached at Ser-281. A propeptide spans 282–310 (removed in mature form); the sequence is DAYGYHSSASAAYQMLLPVLLAVALPGSL.

The protein belongs to the peptidase S1 family. In terms of tissue distribution, expressed primarily in distal gut.

It localises to the cell membrane. With respect to regulation, inhibited by aprotinin, leupeptin, benzamidine and soybean trypsin inhibitor. Partially inhibited by PMSF and DFP. Functionally, selectively cleaves synthetic peptide substrates of trypsin. Activates the epithelial sodium channel ENaC. In Mus musculus (Mouse), this protein is Serine protease 30 (Prss30).